Reading from the N-terminus, the 261-residue chain is 5'-nucleotidase SurE (261 aa).

A divalent metal cation is bound by residues Asp-12, Asp-13, Ser-43, and Asn-99.

It belongs to the SurE nucleotidase family. It depends on a divalent metal cation as a cofactor.

The protein resides in the cytoplasm. It catalyses the reaction a ribonucleoside 5'-phosphate + H2O = a ribonucleoside + phosphate. Its function is as follows. Nucleotidase that shows phosphatase activity on nucleoside 5'-monophosphates. The protein is 5'-nucleotidase SurE of Polynucleobacter asymbioticus (strain DSM 18221 / CIP 109841 / QLW-P1DMWA-1) (Polynucleobacter necessarius subsp. asymbioticus).